Reading from the N-terminus, the 332-residue chain is UBA domain-containing protein Mud1 (332 aa).

Asp127 is an active-site residue. A disordered region spans residues 246 to 298; the sequence is GLGIEPASKASASSPNPQSGTRLGTKESVAPNNEGSSNPPSLVNPPTDPGLNS. A compositionally biased stretch (low complexity) spans 251–264; sequence PASKASASSPNPQS. Polar residues predominate over residues 275 to 286; it reads APNNEGSSNPPS. The UBA domain occupies 291 to 332; the sequence is PTDPGLNSKIAQLVSMGFDPLEAAQALDAANGDLDVAASFLL.

It belongs to the DDI1 family. As to quaternary structure, homodimer. Interacts (via UBA domain) with polyubiquitin (polyUb) chains (via Lys-48-linked polyUbs). Has weak binding affinity for monoubiquitin. According to another report, has no affinity for monoubiquitin.

It is found in the cytoplasm. It localises to the cell membrane. Its function is as follows. Recognizes and binds polyubiquitin chains. Acts as a linker between the 19S proteasome and polyubiquitinated proteins via UBA domain interactions with ubiquitin for their subsequent degradation. Aspartic protease. Appears to act as negative regulator of constitutive exocytosis. May act at the level of secretory vesicle docking and fusion as a competitive inhibitor of SNARE assembly. Required for S-phase checkpoint control. This chain is UBA domain-containing protein Mud1, found in Schizosaccharomyces pombe (strain 972 / ATCC 24843) (Fission yeast).